Reading from the N-terminus, the 104-residue chain is Toxin-like protein 14 (104 aa).

A signal peptide spans 1-25 (MNTYNARLYIFSLALALVILKGTKC).

In terms of processing, contains 4 disulfide bonds. As to expression, expressed by the venom gland.

The protein localises to the secreted. This Urodacus yaschenkoi (Inland robust scorpion) protein is Toxin-like protein 14.